We begin with the raw amino-acid sequence, 279 residues long: 4-hydroxy-3-methylbut-2-enyl diphosphate reductase (279 aa).

Cys12 is a [4Fe-4S] cluster binding site. Residues His36 and His70 each contribute to the (2E)-4-hydroxy-3-methylbut-2-enyl diphosphate site. Residues His36 and His70 each contribute to the dimethylallyl diphosphate site. His36 and His70 together coordinate isopentenyl diphosphate. Cys92 is a binding site for [4Fe-4S] cluster. Residue His120 coordinates (2E)-4-hydroxy-3-methylbut-2-enyl diphosphate. A dimethylallyl diphosphate-binding site is contributed by His120. An isopentenyl diphosphate-binding site is contributed by His120. The active-site Proton donor is Glu122. Thr158 contributes to the (2E)-4-hydroxy-3-methylbut-2-enyl diphosphate binding site. Cys186 provides a ligand contact to [4Fe-4S] cluster. Positions 214, 215, 216, and 258 each coordinate (2E)-4-hydroxy-3-methylbut-2-enyl diphosphate. Ser214, Ser215, Asn216, and Ser258 together coordinate dimethylallyl diphosphate. Residues Ser214, Ser215, Asn216, and Ser258 each contribute to the isopentenyl diphosphate site.

The protein belongs to the IspH family. It depends on [4Fe-4S] cluster as a cofactor.

It carries out the reaction isopentenyl diphosphate + 2 oxidized [2Fe-2S]-[ferredoxin] + H2O = (2E)-4-hydroxy-3-methylbut-2-enyl diphosphate + 2 reduced [2Fe-2S]-[ferredoxin] + 2 H(+). The enzyme catalyses dimethylallyl diphosphate + 2 oxidized [2Fe-2S]-[ferredoxin] + H2O = (2E)-4-hydroxy-3-methylbut-2-enyl diphosphate + 2 reduced [2Fe-2S]-[ferredoxin] + 2 H(+). The protein operates within isoprenoid biosynthesis; dimethylallyl diphosphate biosynthesis; dimethylallyl diphosphate from (2E)-4-hydroxy-3-methylbutenyl diphosphate: step 1/1. Its pathway is isoprenoid biosynthesis; isopentenyl diphosphate biosynthesis via DXP pathway; isopentenyl diphosphate from 1-deoxy-D-xylulose 5-phosphate: step 6/6. Catalyzes the conversion of 1-hydroxy-2-methyl-2-(E)-butenyl 4-diphosphate (HMBPP) into a mixture of isopentenyl diphosphate (IPP) and dimethylallyl diphosphate (DMAPP). Acts in the terminal step of the DOXP/MEP pathway for isoprenoid precursor biosynthesis. The chain is 4-hydroxy-3-methylbut-2-enyl diphosphate reductase from Campylobacter fetus subsp. fetus (strain 82-40).